Here is a 158-residue protein sequence, read N- to C-terminus: Regenerating islet-derived protein 4 (158 aa).

An N-terminal signal peptide occupies residues 1 to 22 (MASRSMRLLLLLSCLAKTGVLG). A disulfide bridge connects residues Cys-30 and Cys-41. One can recognise a C-type lectin domain in the interval 37–155 (HKSNCYGYFR…CNKRQHFLCK (119 aa)). Asn-50 carries an N-linked (GlcNAc...) asparagine glycan. Intrachain disulfides connect Cys-58/Cys-154 and Cys-129/Cys-146. A carbohydrate contacts are provided by residues 98 to 103 (DPQKRQ) and 135 to 137 (NNN).

In terms of tissue distribution, highly expressed in the gastrointestinal tract including the duodenum, jejunum, ileum, ileocecum, appendix, descending colon, pancreas and small intestine. Weakly expressed in normal colon and stomach. Strongly expressed in most colorectal tumors than in normal colon. Preferentially expressed in mucinous tumors and in some cases neuro-endocrine tumors. Expressed in mucus-secreting cells and enterocyte-like cells. In small intestine expressed at the basal perinuclear zone of goblet cells.

Its subcellular location is the secreted. Calcium-independent lectin displaying mannose-binding specificity and able to maintain carbohydrate recognition activity in an acidic environment. May be involved in inflammatory and metaplastic responses of the gastrointestinal epithelium. The protein is Regenerating islet-derived protein 4 (REG4) of Homo sapiens (Human).